The sequence spans 259 residues: UBX domain-containing protein 2A (259 aa).

The segment at 1–151 is required for interaction with CHRNA3; sequence MKDVDNLKSI…SATPKIVSKA (151 aa). A required for inhibition of CHRNA3 ubiquitination and translocation of CHRNA3 to the plasma membrane resulting in an increase in acetylcholine-gated nicotinic acetylcholine receptor currents region spans residues 1–164; the sequence is MKDVDNLKSI…EVENKNNLSA (164 aa). The region spanning 60 to 124 is the SEP domain; that stretch reads QVDVNIKLWK…VEDKKNEICL (65 aa). Positions 167–259 are required for interaction with VCP; sequence LNNLEPITNI…TASFRELSEH (93 aa). The UBX domain maps to 169-246; the sequence is NLEPITNIQI…DLQNAVIIQR (78 aa).

In terms of assembly, part of a complex composed of STUB1/CHIP, VCP/p97, CHRNA3, and UBXN2A that modulates the ubiquitination and endoplasmic reticulum-associated degradation (ERAD) of CHRNA3. Within the complex UBXN2A acts as a scaffold protein required for the interaction of CHRNA3 with VCP/p97, this interaction also inhibits CHRNA3 ubiquitination by STUB1/CHIP and subsequently ERAD. Interacts (via SEP domain) with CHRNA3 and interacts (via UBX domain) with VCP/P97; these interactions are required for the interaction of CHRNA3 with the STUB1-VCP-UBXN2A complex. Interacts with HSPA9/MOT-2 (via SBD domain); the interaction inhibits HSPA9/MOT-2 interaction with and degradation of p53, thereby promotes p53 translocation to the nucleus. Interacts with RICTOR. Post-translationally, ubiquitinated. In terms of tissue distribution, expressed in the colon (at protein level).

The protein resides in the golgi apparatus. Its subcellular location is the endoplasmic reticulum. The protein localises to the perikaryon. It localises to the cell projection. It is found in the dendrite. The protein resides in the nucleus. Its subcellular location is the cytoplasm. Acts to repress the ubiquitination and subsequent endoplasmic reticulum-associated degradation of CHRNA3 by the STUB1-VCP-UBXN2A complex in cortical neurons. Also acts to promote the translocation of CHRNA3 to the plasma membrane and subsequently increases plasma membrane acetylcholine-gated ion-channel activation. Plays a role in the inhibition of STUB1-mediated TP53 degradation, via its interaction with HSPA9 which acts to inhibit TP53 binding to HSPA9. Positively mediates the ubiquitination and proteosomal degradation of RICTOR, may thereby act as a negative regulator of the mTORC2 pathway. The polypeptide is UBX domain-containing protein 2A (Homo sapiens (Human)).